The following is a 468-amino-acid chain: Methionine aminopeptidase 2 (468 aa).

The segment covering 63 to 74 (AAKEATKKDAKG) has biased composition (basic and acidic residues). The tract at residues 63–87 (AAKEATKKDAKGGKGKANGSAAATA) is disordered. H219 is a binding site for substrate. The a divalent metal cation site is built by D239, D250, and H319. H327 contributes to the substrate binding site. Residues E352 and E449 each coordinate a divalent metal cation.

This sequence belongs to the peptidase M24A family. Methionine aminopeptidase eukaryotic type 2 subfamily. It depends on Co(2+) as a cofactor. The cofactor is Zn(2+). Mn(2+) serves as cofactor. Fe(2+) is required as a cofactor.

It is found in the cytoplasm. The enzyme catalyses Release of N-terminal amino acids, preferentially methionine, from peptides and arylamides.. Inhibited by the fumagillin analog, TNP-470. In terms of biological role, cotranslationally removes the N-terminal methionine from nascent proteins. The N-terminal methionine is often cleaved when the second residue in the primary sequence is small and uncharged (Met-Ala-, Cys, Gly, Pro, Ser, Thr, or Val). Required for germ cell proliferation and/or differentiation. This is Methionine aminopeptidase 2 from Caenorhabditis elegans.